The sequence spans 270 residues: Cytosolic Fe-S cluster assembly factor NUBP2 homolog (270 aa).

G21–S28 serves as a coordination point for ATP. Residues C195 and C198 each contribute to the [4Fe-4S] cluster site.

Belongs to the Mrp/NBP35 ATP-binding proteins family. NUBP2/CFD1 subfamily. As to quaternary structure, heterotetramer of 2 NUBP1 and 2 NUBP2 chains. Requires [4Fe-4S] cluster as cofactor.

The protein localises to the cytoplasm. Functionally, component of the cytosolic iron-sulfur (Fe/S) protein assembly (CIA) machinery. Required for maturation of extramitochondrial Fe-S proteins. The NUBP1-NUBP2 heterotetramer forms a Fe-S scaffold complex, mediating the de novo assembly of an Fe-S cluster and its transfer to target apoproteins. This chain is Cytosolic Fe-S cluster assembly factor NUBP2 homolog, found in Nematostella vectensis (Starlet sea anemone).